A 334-amino-acid polypeptide reads, in one-letter code: uncharacterized protein (334 aa).

WD repeat units lie at residues 56 to 86 (LKGE…KLWT), 98 to 128 (KPVA…RIWD), 139 to 169 (GHTS…EGWS), 220 to 250 (TDQG…RVFN), and 262 to 291 (LDDG…RVWN).

This is an uncharacterized protein from Synechocystis sp. (strain ATCC 27184 / PCC 6803 / Kazusa).